We begin with the raw amino-acid sequence, 2040 residues long: Apolipoprotein(a) (2040 aa).

Positions 1-19 (MEHKEVVLLLLLFLKSAAP) are cleaved as a signal peptide. 10 Kringle domains span residues 27–105 (DCYH…LTQC), 141–219 (ECYH…LTQC), 255–333 (ECYH…LTQC), 369–447 (ECYH…LTQC), 483–561 (ECYH…LTQC), 597–675 (ECYH…LTQC), 711–789 (ECYH…LTQC), 825–903 (ECYH…LTQC), 939–1017 (ECYH…LTRC), and 1053–1131 (DCYY…LTQC). Disulfide bonds link C28/C105, C49/C88, C77/C100, C142/C219, C163/C202, C191/C214, C256/C333, C277/C316, C305/C328, C370/C447, C391/C430, C419/C442, C484/C561, C505/C544, C533/C556, C598/C675, C619/C658, C647/C670, C712/C789, C733/C772, C761/C784, C826/C903, C847/C886, C875/C898, C940/C1017, C961/C1000, C989/C1012, C1054/C1131, C1075/C1114, and C1103/C1126. Residue N61 is glycosylated (N-linked (GlcNAc...) asparagine). N-linked (GlcNAc...) asparagine glycosylation occurs at N101. N-linked (GlcNAc...) asparagine glycosylation occurs at N215. N329 is a glycosylation site (N-linked (GlcNAc...) asparagine). N443 carries N-linked (GlcNAc...) asparagine glycosylation. N-linked (GlcNAc...) asparagine glycosylation is present at N557. The N-linked (GlcNAc...) asparagine glycan is linked to N671. N785 carries an N-linked (GlcNAc...) asparagine glycan. Residue N899 is glycosylated (N-linked (GlcNAc...) asparagine). N-linked (GlcNAc...) asparagine glycosylation is present at N1013. N1127 carries N-linked (GlcNAc...) asparagine glycosylation. Residues 1147 to 1166 (DPSTEASSEEAPTEQSPGVQ) form a disordered region. 2 consecutive Kringle domains span residues 1167 to 1245 (DCYH…LTQC) and 1273 to 1351 (DCYH…LTQC). Disulfide bonds link C1168–C1245, C1189–C1228, C1217–C1240, C1274–C1351, C1295–C1334, and C1323–C1346. An N-linked (GlcNAc...) asparagine glycan is attached at N1241. 2 N-linked (GlcNAc...) asparagine glycosylation sites follow: N1347 and N1381. The segment at 1365 to 1388 (VPVPSTELPSEEAPTENSTGVQDC) is disordered. Residues 1387 to 1465 (DCYRGDGQSY…RWEYCNLTRC (79 aa)) form the Kringle 13 domain. 3 disulfide bridges follow: C1388-C1465, C1409-C1448, and C1437-C1460. Residue N1461 is glycosylated (N-linked (GlcNAc...) asparagine). A disordered region spans residues 1476-1497 (PTVAPVPSTEAPSEQAPPEKSP). 3 consecutive Kringle domains span residues 1501-1579 (DCYH…LTQC), 1615-1693 (QCYH…LTRC), and 1719-1799 (DCMF…IPLC). 10 cysteine pairs are disulfide-bonded: C1502-C1579, C1523-C1562, C1551-C1574, C1616-C1693, C1637-C1676, C1665-C1688, C1720-C1799, C1741-C1782, C1770-C1794, and C1846-C1862. N-linked (GlcNAc...) asparagine glycosylation is present at N1575. N1689 carries an N-linked (GlcNAc...) asparagine glycan. Residues 1820 to 2038 (IVGGCVAHPH…FVTWIEGMMR (219 aa)) enclose the Peptidase S1 domain. Catalysis depends on charge relay system residues H1861 and D1904. Cystine bridges form between C1938-C1996, C1968-C1975, and C1986-C2014. Residue S1990 is the Charge relay system of the active site.

This sequence belongs to the peptidase S1 family. Plasminogen subfamily. In terms of assembly, disulfide-linked to apo-B100. Binds to fibronectin and decorin. In terms of processing, N- and O-glycosylated. The N-glycans are complex biantennary structures present in either a mono- or disialylated state. The O-glycans are mostly (80%) represented by the monosialylated core type I structure, NeuNAcalpha2-3Galbeta1-3GalNAc, with smaller amounts of disialylated and non-sialylated O-glycans also detected.

Its function is as follows. Apo(a) is the main constituent of lipoprotein(a) (Lp(a)). It has serine proteinase activity and is able of autoproteolysis. Inhibits tissue-type plasminogen activator 1. Lp(a) may be a ligand for megalin/Gp 330. The polypeptide is Apolipoprotein(a) (LPA) (Homo sapiens (Human)).